Consider the following 200-residue polypeptide: MKWRHDYMAEKKVEDLEMDLNEEELEESEVNEDKEFEELDKSEEENEVEELISTLKDENEKLNNEMEALKDRLLRTTGEYDNYRKRTDREKEGLYASACEDVLKEILPVLDNLERAILAKGDIEDLKKGVDMTLKQFKDSFKNLGVEEISTENGFDPNLHDAVMHVEDSQYGEKEVVEVFLKGYKKGDKIIRHSMVKVAN.

A disordered region spans residues 15 to 47; it reads DLEMDLNEEELEESEVNEDKEFEELDKSEEENE. Residues 16–47 are compositionally biased toward acidic residues; the sequence is LEMDLNEEELEESEVNEDKEFEELDKSEEENE.

The protein belongs to the GrpE family. As to quaternary structure, homodimer.

Its subcellular location is the cytoplasm. In terms of biological role, participates actively in the response to hyperosmotic and heat shock by preventing the aggregation of stress-denatured proteins, in association with DnaK and GrpE. It is the nucleotide exchange factor for DnaK and may function as a thermosensor. Unfolded proteins bind initially to DnaJ; upon interaction with the DnaJ-bound protein, DnaK hydrolyzes its bound ATP, resulting in the formation of a stable complex. GrpE releases ADP from DnaK; ATP binding to DnaK triggers the release of the substrate protein, thus completing the reaction cycle. Several rounds of ATP-dependent interactions between DnaJ, DnaK and GrpE are required for fully efficient folding. This Clostridium tetani (strain Massachusetts / E88) protein is Protein GrpE.